Reading from the N-terminus, the 61-residue chain is Insect toxin BsIT1 (61 aa).

The LCN-type CS-alpha/beta domain maps to 1–61 (DGYILMRNGC…KHLNYHKKTC (61 aa)). Cystine bridges form between Cys-10–Cys-61, Cys-14–Cys-35, Cys-21–Cys-42, and Cys-25–Cys-44.

It belongs to the long (4 C-C) scorpion toxin superfamily. Sodium channel inhibitor family. Beta subfamily. Expressed by the venom gland.

The protein localises to the secreted. Its function is as follows. Depressant insect beta-toxins cause a transient contraction paralysis followed by a slow flaccid paralysis. They bind voltage-independently at site-4 of sodium channels (Nav) and shift the voltage of activation toward more negative potentials thereby affecting sodium channel activation and promoting spontaneous and repetitive firing. This toxin is active only on insects and causes a transient contraction paralysis followed by a slow flaccid paralysis. In Hottentotta tamulus sindicus (Scorpion), this protein is Insect toxin BsIT1.